The sequence spans 327 residues: Zinc transport protein ZntB (327 aa).

Residues 1–273 (MDAIKGSELQ…ARRTYTMSLM (273 aa)) are Cytoplasmic-facing. Residues 274–294 (AMVFLPSTFLTGLFGVNLGGI) form a helical membrane-spanning segment. Topologically, residues 295–300 (PGNSWH) are periplasmic. A helical transmembrane segment spans residues 301 to 321 (LGFSLFCLMLVVVIGGVAWWL). At 322–327 (HRSKWL) the chain is on the cytoplasmic side.

Belongs to the CorA metal ion transporter (MIT) (TC 1.A.35) family.

It is found in the cell inner membrane. The catalysed reaction is Zn(2+)(out) + H(+)(out) = Zn(2+)(in) + H(+)(in). Its function is as follows. Zinc transporter. Acts as a Zn(2+):proton symporter, which likely mediates zinc ion uptake. This chain is Zinc transport protein ZntB, found in Klebsiella pneumoniae subsp. pneumoniae (strain ATCC 700721 / MGH 78578).